The sequence spans 208 residues: MSETAPAASSTLVPAPVEKPATKRRGKKPGMATARKPRGFSVSKLIPEALSMSQERAGMSLAALKKALAAAGYDVEKNNSRIKLALKRLVNKGVLVQTKGTGASGSFKLSKKAASGNDKGKGKKSASAKAKKLGLSRASRSPKSSKTKVVKKPKATPTKGSGSRRKTKGAKGLQQRKSPAKARATNSNSGKSKMVMQKTDLRKAAGRK.

Residues 1–12 show a composition bias toward polar residues; that stretch reads MSETAPAASSTL. The interval 1 to 39 is disordered; it reads MSETAPAASSTLVPAPVEKPATKRRGKKPGMATARKPRG. Position 9 is a phosphoserine (serine 9). The 74-residue stretch at 38–111 folds into the H15 domain; the sequence is RGFSVSKLIP…GASGSFKLSK (74 aa). Arginine 56 is modified (citrulline). The interval 93-208 is disordered; the sequence is GVLVQTKGTG…TDLRKAAGRK (116 aa). The segment covering 121 to 134 has biased composition (basic residues); that stretch reads KGKKSASAKAKKLG. Residue serine 141 is modified to Phosphoserine. The segment covering 143-154 has biased composition (basic residues); that stretch reads KSSKTKVVKKPK. The residue at position 156 (threonine 156) is a Phosphothreonine. Residues serine 163, serine 178, and serine 187 each carry the phosphoserine modification. The segment covering 199-208 has biased composition (basic and acidic residues); the sequence is TDLRKAAGRK.

It belongs to the histone H1/H5 family. In terms of processing, phosphorylated in early spermatids. Post-translationally, citrullination at Arg-56 (H1R54ci) by PADI4 takes place within the DNA-binding site of H1 and results in its displacement from chromatin and global chromatin decondensation, thereby promoting pluripotency and stem cell maintenance. Testis-specific. Expressed in pachytene spermatocytes during meiotic prophase I.

The protein resides in the nucleus. The protein localises to the chromosome. Testis-specific histone H1 that forms less compacted chromatin compared to other H1 histone subtypes. Formation of more relaxed chromatin may be required to promote chromatin architecture required for proper chromosome regulation during meiosis, such as homologous recombination. Histones H1 act as linkers that bind to nucleosomes and compact polynucleosomes into a higher-order chromatin configuration. This is Histone H1t from Rattus norvegicus (Rat).